The sequence spans 380 residues: 1-deoxy-D-xylulose 5-phosphate reductoisomerase (380 aa).

Residues Thr10, Gly11, Ser12, Ile13, Gly35, and Asn121 each coordinate NADPH. 1-deoxy-D-xylulose 5-phosphate is bound at residue Lys122. An NADPH-binding site is contributed by Glu123. A Mn(2+)-binding site is contributed by Asp147. 1-deoxy-D-xylulose 5-phosphate is bound by residues Ser148, Glu149, Ser173, and His196. Residue Glu149 coordinates Mn(2+). NADPH is bound at residue Gly202. Ser209, Asn214, Lys215, and Glu218 together coordinate 1-deoxy-D-xylulose 5-phosphate. Glu218 serves as a coordination point for Mn(2+).

It belongs to the DXR family. It depends on Mg(2+) as a cofactor. Mn(2+) is required as a cofactor.

It catalyses the reaction 2-C-methyl-D-erythritol 4-phosphate + NADP(+) = 1-deoxy-D-xylulose 5-phosphate + NADPH + H(+). It participates in isoprenoid biosynthesis; isopentenyl diphosphate biosynthesis via DXP pathway; isopentenyl diphosphate from 1-deoxy-D-xylulose 5-phosphate: step 1/6. In terms of biological role, catalyzes the NADPH-dependent rearrangement and reduction of 1-deoxy-D-xylulose-5-phosphate (DXP) to 2-C-methyl-D-erythritol 4-phosphate (MEP). The chain is 1-deoxy-D-xylulose 5-phosphate reductoisomerase from Lachnospira eligens (strain ATCC 27750 / DSM 3376 / VPI C15-48 / C15-B4) (Eubacterium eligens).